Consider the following 259-residue polypeptide: MSIKMKYNLGYLFDLLVVITNKDLKVRYKSSMLGYLWSVANPLLFAMIYYFIFKLVMRVQIPNYTVFLITGLFPWQWFASSATNSLFSFIANAQIIKKTVFPRSVIPLSNVMMEGLHFLCTIPVIVVFLFVYGMTPSLSWVWGIPLIAIGQVIFTFGVSIIFSTLNLFFRDLERFVSLGIMLMFYCTPILYASDMIPEKFSWIITYNPLASMILSWRDLFMNGTLNYEYISILYFTGIILTVVGLSIFNKLKYRFAEIL.

The next 6 membrane-spanning stretches (helical) occupy residues 33–53, 73–95, 111–131, 142–162, 176–196, and 228–248; these read LGYL…YFIF, FPWQ…NAQI, VMME…FLFV, WGIP…SIIF, VSLG…SDMI, and EYIS…LSIF. Positions 33–251 constitute an ABC transmembrane type-2 domain; that stretch reads LGYLWSVANP…VVGLSIFNKL (219 aa).

The protein belongs to the ABC-2 integral membrane protein family.

Its subcellular location is the cell inner membrane. Its function is as follows. May form an ATP-driven O-antigen export apparatus, in association with RfbB. The sequence is that of O-antigen export system permease protein RfbA (rfbA) from Klebsiella pneumoniae.